The following is a 265-amino-acid chain: Undecaprenyl-diphosphatase (265 aa).

7 helical membrane-spanning segments follow: residues 41-61 (IAYT…LIYF), 75-95 (LKFL…LYVI), 104-124 (YNPS…GIYI), 137-157 (LSTK…LPGV), 180-200 (YSYL…LLFT), 215-235 (GIAL…GFLL), and 244-264 (YLID…GLII).

It belongs to the UppP family.

The protein resides in the cell membrane. It carries out the reaction di-trans,octa-cis-undecaprenyl diphosphate + H2O = di-trans,octa-cis-undecaprenyl phosphate + phosphate + H(+). In terms of biological role, catalyzes the dephosphorylation of undecaprenyl diphosphate (UPP). The polypeptide is Undecaprenyl-diphosphatase (Saccharolobus islandicus (strain Y.N.15.51 / Yellowstone #2) (Sulfolobus islandicus)).